We begin with the raw amino-acid sequence, 144 residues long: Group IID secretory phospholipase A2 (144 aa).

The signal sequence occupies residues 1–19; that stretch reads MRLALLCGLLLAGITATQG. Cystine bridges form between Cys45–Cys137, Cys47–Cys63, Cys62–Cys117, Cys68–Cys144, Cys69–Cys110, Cys78–Cys103, and Cys96–Cys108. His46, Gly48, and Gly50 together coordinate Ca(2+). Residue His66 is part of the active site. Residue Asp67 participates in Ca(2+) binding. Asn99 carries an N-linked (GlcNAc...) asparagine glycan. Asp111 is a catalytic residue.

The protein belongs to the phospholipase A2 family. It depends on Ca(2+) as a cofactor. As to expression, highly expressed in secondary lymphoid tissues, spleen and lymph nodes. Expressed at a lesser extent in thymus. Expressed in CD4-positive, IL2RA/CD25-positive, FOXP3-positive Tregs (at protein level). Expressed in myeloid cell subsets resident in spleen and lymph nodes, ITGAX/CD11C-positive dendritic cells and macrophages (at protein level). Enriched in CD4-positive, ITGAM/CD11B-positive dendritic cell subset. Expressed in pulmonary ITGAX/CD11C-positive dendritic cell subset (at protein level).

Its subcellular location is the secreted. The protein localises to the cell membrane. The protein resides in the cytoplasm. The enzyme catalyses a 1,2-diacyl-sn-glycero-3-phosphoethanolamine + H2O = a 1-acyl-sn-glycero-3-phosphoethanolamine + a fatty acid + H(+). The catalysed reaction is 1-hexadecanoyl-2-(9Z-octadecenoyl)-sn-glycero-3-phosphoethanolamine + H2O = 1-hexadecanoyl-sn-glycero-3-phosphoethanolamine + (9Z)-octadecenoate + H(+). It catalyses the reaction 1-hexadecanoyl-2-(9Z,12Z-octadecadienoyl)-sn-glycero-3-phosphoethanolamine + H2O = 1-hexadecanoyl-sn-glycero-3-phosphoethanolamine + (9Z,12Z)-octadecadienoate + H(+). It carries out the reaction 1,2-dihexadecanoyl-sn-glycero-3-phospho-(1'-sn-glycerol) + H2O = 1-hexadecanoyl-sn-glycero-3-phospho-(1'-sn-glycerol) + hexadecanoate + H(+). The enzyme catalyses 1-hexadecanoyl-2-(9Z-octadecenoyl)-sn-glycero-3-phospho-(1'-sn-glycerol) + H2O = 1-hexadecanoyl-sn-glycero-3-phospho-(1'-sn-glycerol) + (9Z)-octadecenoate + H(+). The catalysed reaction is a 1,2-diacyl-sn-glycero-3-phosphocholine + H2O = a 1-acyl-sn-glycero-3-phosphocholine + a fatty acid + H(+). It catalyses the reaction 1,2-dihexadecanoyl-sn-glycero-3-phosphocholine + H2O = 1-hexadecanoyl-sn-glycero-3-phosphocholine + hexadecanoate + H(+). It carries out the reaction 1-hexadecanoyl-2-(9Z-octadecenoyl)-sn-glycero-3-phosphocholine + H2O = 1-hexadecanoyl-sn-glycero-3-phosphocholine + (9Z)-octadecenoate + H(+). The enzyme catalyses 1-hexadecanoyl-2-(9Z,12Z-octadecadienoyl)-sn-glycero-3-phosphocholine + H2O = (9Z,12Z)-octadecadienoate + 1-hexadecanoyl-sn-glycero-3-phosphocholine + H(+). The catalysed reaction is 1-hexadecanoyl-2-(4Z,7Z,10Z,13Z,16Z,19Z-docosahexaenoyl)-sn-glycero-3-phosphocholine + H2O = (4Z,7Z,10Z,13Z,16Z,19Z)-docosahexaenoate + 1-hexadecanoyl-sn-glycero-3-phosphocholine + H(+). Its function is as follows. Secretory calcium-dependent phospholipase A2 that primarily targets extracellular lipids, exerting anti-inflammatory and immunosuppressive functions. Hydrolyzes the ester bond of the fatty acyl group attached at sn-2 position of phospholipids (phospholipase A2 activity) with preference for phosphatidylethanolamines and phosphatidylglycerols over phosphatidylcholines. In draining lymph nodes, selectively hydrolyzes diacyl and alkenyl forms of phosphatidylethanolamines, releasing omega-3 polyunsaturated fatty acids (PUFAs) such as eicosapentaenoate and docosahexaenoate that are precursors of the anti-inflammatory lipid mediators, resolvins. During the resolution phase of acute inflammation drives docosahexaenoate-derived resolvin D1 synthesis, which suppresses dendritic cell activation and T-helper 1 immune response. May act in an autocrine and paracrine manner. Via a mechanism independent of its catalytic activity, promotes differentiation of regulatory T cells (Tregs) and participates in the maintenance of immune tolerance. May contribute to lipid remodeling of cellular membranes and generation of lipid mediators involved in pathogen clearance. Displays bactericidal activity against Gram-positive bacteria by directly hydrolyzing phospholipids of the bacterial membrane. This is Group IID secretory phospholipase A2 (Pla2g2d) from Mus musculus (Mouse).